The primary structure comprises 392 residues: THO complex subunit MFT1 (392 aa).

Acidic residues-rich tracts occupy residues 258–271 (DNID…EDEE) and 290–330 (NVDE…EVDG). Positions 258 to 392 (DNIDEDYESD…SASSSVEEVK (135 aa)) are disordered. At Ser266 the chain carries Phosphoserine. Polar residues predominate over residues 331 to 344 (ESSQQEDNSRQGNN). Residues 345–367 (EETDKETGVIEEPDAVNDAEEAD) are compositionally biased toward acidic residues. Residues 377–392 (GTTSDFSASSSVEEVK) are compositionally biased toward polar residues.

Component of the THO complex, which is composed of HPR1, MFT1, THO2 and THP2. Together with SUB2, TEX1 and YRA1, THO forms the transcription/export (TREX) complex. THO associates with DNA and RNA in vitro.

It is found in the nucleus. Its function is as follows. Component the THO subcomplex of the TREX complex, which operates in coupling transcription elongation to mRNA export. The THO complex is recruited to transcribed genes and moves along the gene with the elongating polymerase during transcription. THO is important for stabilizing nascent RNA in the RNA polymerase II elongation complex by preventing formation of DNA:RNA hybrids behind the elongating polymerase. It functions in cotranscriptional formation of an export-competent messenger ribonucleoprotein particle (mRNP) by facilitating the loading of ATP-dependent RNA helicase SUB2 and the mRNA export factor YRA1 along the nascent mRNA. This chain is THO complex subunit MFT1 (MFT1), found in Saccharomyces cerevisiae (strain ATCC 204508 / S288c) (Baker's yeast).